We begin with the raw amino-acid sequence, 472 residues long: MSRKCEFLVVGGGIAGVSCAESLAIYRPNASILLLTESSIVKSVTNLVPVARYLHKFDVREQDVSEMGASFQTLVDRLDHINSREHCIRTKAGLEIKYRYLCLCTGGTPKLFSGKVVNPLVIGIRDTDSVQLLQRKLATAKDVLILGNGGIASELAYELKDVNVHWVVKDSHISATFVDPGAAEFFHIAMNECNAKDSSPVVAIKRMRYSEVLPKEQTNNHGAALGPDWHRSVDLSGAREGEENRLPKIYYKSRISSVQDLADDAGAIVKLEHEDGSFQQLTCDFIVSATGVWPNTDYTCDSPLQFSDDGGISVDEMMRTNLVDVFAAGDVCTANWPAAMHWFQMRLWTQARQMGSMAGRSMAAASEGESVYQDFCFELFGHVTKLFGYPVVLLGRFNGQDLGRDYEILVRCTRNKEYIKFVLQNGRLRGAMLIGNTDLAETCENLILNGIDLEPYGDDILNPDIDIEDYFD.

It belongs to the class-I pyridine nucleotide-disulfide oxidoreductase family. PYROXD1 subfamily. FAD serves as cofactor.

In terms of biological role, probable oxidoreductase. The polypeptide is Pyridine nucleotide-disulfide oxidoreductase domain-containing protein 1 (Drosophila melanogaster (Fruit fly)).